The following is a 508-amino-acid chain: Photosystem II CP47 reaction center protein (508 aa).

6 helical membrane-spanning segments follow: residues 21–36 (SVHI…WAGS), 101–115 (IVFS…IWHW), 140–156 (GIHL…FGVF), 203–218 (IAAG…FHLS), 237–252 (VLSS…AFVV), and 457–472 (SFAL…HGAR).

Belongs to the PsbB/PsbC family. PsbB subfamily. In terms of assembly, PSII is composed of 1 copy each of membrane proteins PsbA, PsbB, PsbC, PsbD, PsbE, PsbF, PsbH, PsbI, PsbJ, PsbK, PsbL, PsbM, PsbT, PsbX, PsbY, PsbZ, Psb30/Ycf12, at least 3 peripheral proteins of the oxygen-evolving complex and a large number of cofactors. It forms dimeric complexes. It depends on Binds multiple chlorophylls. PSII binds additional chlorophylls, carotenoids and specific lipids. as a cofactor.

The protein resides in the plastid. The protein localises to the chloroplast thylakoid membrane. Functionally, one of the components of the core complex of photosystem II (PSII). It binds chlorophyll and helps catalyze the primary light-induced photochemical processes of PSII. PSII is a light-driven water:plastoquinone oxidoreductase, using light energy to abstract electrons from H(2)O, generating O(2) and a proton gradient subsequently used for ATP formation. This is Photosystem II CP47 reaction center protein from Jasminum nudiflorum (Winter jasmine).